Here is a 424-residue protein sequence, read N- to C-terminus: Isovaleryl-CoA dehydrogenase, mitochondrial (424 aa).

Residues 1–30 (MATAVRLLGRRVSSWRLRPLPSPLAVPQRA) constitute a mitochondrion transit peptide. An N6-acetyllysine; alternate mark is found at lysine 56, lysine 65, and lysine 76. An N6-succinyllysine; alternate mark is found at lysine 56, lysine 65, and lysine 76. FAD contacts are provided by residues 163-172 (LAMSEPNAGS) and 196-198 (WIT). A substrate-binding site is contributed by serine 172. 220-221 (SR) provides a ligand contact to substrate. Lysine 239 carries the N6-acetyllysine modification. At lysine 260 the chain carries N6-acetyllysine; alternate. At lysine 260 the chain carries N6-succinyllysine; alternate. Residues tyrosine 275 and 282–285 (DLER) each bind substrate. The active-site Proton acceptor is the glutamate 284. Arginine 310 lines the FAD pocket. Lysine 316 carries the N6-succinyllysine modification. FAD contacts are provided by residues glutamine 321 and 378-382 (QCLGG). Residue 405–406 (GG) coordinates substrate. Position 407–409 (407–409 (TSE)) interacts with FAD.

Belongs to the acyl-CoA dehydrogenase family. As to quaternary structure, homotetramer. It depends on FAD as a cofactor.

The protein localises to the mitochondrion matrix. It carries out the reaction 3-methylbutanoyl-CoA + oxidized [electron-transfer flavoprotein] + H(+) = 3-methylbut-2-enoyl-CoA + reduced [electron-transfer flavoprotein]. The enzyme catalyses pentanoyl-CoA + oxidized [electron-transfer flavoprotein] + H(+) = (2E)-pentenoyl-CoA + reduced [electron-transfer flavoprotein]. The catalysed reaction is hexanoyl-CoA + oxidized [electron-transfer flavoprotein] + H(+) = (2E)-hexenoyl-CoA + reduced [electron-transfer flavoprotein]. It catalyses the reaction butanoyl-CoA + oxidized [electron-transfer flavoprotein] + H(+) = (2E)-butenoyl-CoA + reduced [electron-transfer flavoprotein]. The protein operates within amino-acid degradation; L-leucine degradation; (S)-3-hydroxy-3-methylglutaryl-CoA from 3-isovaleryl-CoA: step 1/3. Functionally, catalyzes the conversion of isovaleryl-CoA/3-methylbutanoyl-CoA to 3-methylbut-2-enoyl-CoA as an intermediate step in the leucine (Leu) catabolic pathway. To a lesser extent, is also able to catalyze the oxidation of other saturated short-chain acyl-CoA thioesters as pentanoyl-CoA, hexenoyl-CoA and butenoyl-CoA. The chain is Isovaleryl-CoA dehydrogenase, mitochondrial (Ivd) from Rattus norvegicus (Rat).